A 183-amino-acid polypeptide reads, in one-letter code: 2-hydroxy-1,4-benzoquinone reductase (183 aa).

Residues 11 to 18 (SLRRDSFN), 77 to 80 (EYNR), and S113 each bind FMN.

Belongs to the SsuE family. Homotetramer. The cofactor is FMN.

It carries out the reaction 2-hydroxy-1,4-benzoquinone + NADH + 2 H(+) = benzene-1,2,4-triol + NAD(+). Functionally, involved in the metabolism of 4-aminophenol. Catalyzes the reduction of the auto-oxidation product 2-hydroxy-1,4-benzoquinone back to hydroxyquinol. Has a broad substrate specificity toward benzoquinones, converting them to the corresponding 1,4-benzenediols. The protein is 2-hydroxy-1,4-benzoquinone reductase of Burkholderia sp.